A 206-amino-acid chain; its full sequence is Small ribosomal subunit protein uS4 (206 aa).

The S4 RNA-binding domain occupies 98–155 (TRLDNVVYRLGWALSRDQARQLVSHGKIAVNGKRVNIPSYNLKPGDVVELLDKDLIPV).

This sequence belongs to the universal ribosomal protein uS4 family. As to quaternary structure, part of the 30S ribosomal subunit. Contacts protein S5. The interaction surface between S4 and S5 is involved in control of translational fidelity.

Functionally, one of the primary rRNA binding proteins, it binds directly to 16S rRNA where it nucleates assembly of the body of the 30S subunit. In terms of biological role, with S5 and S12 plays an important role in translational accuracy. This Dictyoglomus thermophilum (strain ATCC 35947 / DSM 3960 / H-6-12) protein is Small ribosomal subunit protein uS4.